The following is a 374-amino-acid chain: Chaperone protein DnaJ (374 aa).

In terms of domain architecture, J spans 5–70 (DYYEILGVSR…QKRAAYDQYG (66 aa)). The CR-type zinc-finger motif lies at 129–207 (GVTREIRIPT…CHGHGRVEKS (79 aa)). Zn(2+) contacts are provided by C142, C145, C159, C162, C181, C184, C195, and C198. CXXCXGXG motif repeat units follow at residues 142-149 (CDVCHGSG), 159-166 (CPTCHGQG), 181-188 (CPTCQGQG), and 195-202 (CTKCHGHG).

The protein belongs to the DnaJ family. Homodimer. Zn(2+) serves as cofactor.

The protein resides in the cytoplasm. Functionally, participates actively in the response to hyperosmotic and heat shock by preventing the aggregation of stress-denatured proteins and by disaggregating proteins, also in an autonomous, DnaK-independent fashion. Unfolded proteins bind initially to DnaJ; upon interaction with the DnaJ-bound protein, DnaK hydrolyzes its bound ATP, resulting in the formation of a stable complex. GrpE releases ADP from DnaK; ATP binding to DnaK triggers the release of the substrate protein, thus completing the reaction cycle. Several rounds of ATP-dependent interactions between DnaJ, DnaK and GrpE are required for fully efficient folding. Also involved, together with DnaK and GrpE, in the DNA replication of plasmids through activation of initiation proteins. This is Chaperone protein DnaJ from Sodalis glossinidius (strain morsitans).